The primary structure comprises 107 residues: Potassium voltage-gated channel subfamily E member 3 (107 aa).

3 N-linked (GlcNAc...) asparagine glycosylation sites follow: asparagine 5, asparagine 22, and asparagine 45. Positions 31-54 (CRPGPGPGSGTGPDNQTEDHRASL) are disordered. The helical transmembrane segment at 61–81 (SYMYILFVMFLFAVTVGSLIL) threads the bilayer. An interaction with KCNQ1 region spans residues 72 to 83 (FAVTVGSLILGY). Residues 82–103 (GYTRSRKVDKRSDPYHVYIKNR) are Cytoplasmic-facing.

Belongs to the potassium channel KCNE family. Interacts with KCNB1. Interacts with KCNC2. Associates with KCNC4/Kv3.4. Interacts with KCNQ1; associates with a KCNQ1:KCNE3 stoichiometry of 4:4; produces a current with nearly instantaneous activation with a linear current-voltage relationship and alters membrane raft localization; affects KCNQ1 structure and gating properties.

The protein resides in the cell membrane. It localises to the cytoplasm. Its subcellular location is the perikaryon. It is found in the cell projection. The protein localises to the dendrite. The protein resides in the membrane raft. In terms of biological role, ancillary protein that functions as a regulatory subunit of the voltage-gated potassium (Kv) channel complex composed of pore-forming and potassium-conducting alpha subunits and of regulatory beta subunits. KCNE3 beta subunit modulates the gating kinetics and enhances stability of the channel complex. Alters the gating of the delayed rectifier Kv channel containing KCNB1 alpha subunit. Associates with KCNC4/Kv3.4 alpha subunit to form the subthreshold Kv channel in skeletal muscle and to establish the resting membrane potential (RMP) in muscle cells. Association with KCNQ1/KCLQT1 alpha subunit may form the intestinal cAMP-stimulated potassium channel involved in chloride secretion that produces a current with nearly instantaneous activation with a linear current-voltage relationship. The sequence is that of Potassium voltage-gated channel subfamily E member 3 from Rattus norvegicus (Rat).